Consider the following 528-residue polypeptide: GMP synthase [glutamine-hydrolyzing] (528 aa).

Positions 13–204 constitute a Glutamine amidotransferase type-1 domain; sequence AIVILDFGSQ…VYHICGCEPD (192 aa). C90 acts as the Nucleophile in catalysis. Residues H178 and E180 contribute to the active site. Residues 205 to 403 form the GMPS ATP-PPase domain; that stretch reads WTTSAFIDEA…LGLPEEIVRR (199 aa). Position 232–238 (232–238) interacts with ATP; that stretch reads SGGVDSS.

As to quaternary structure, homodimer.

The catalysed reaction is XMP + L-glutamine + ATP + H2O = GMP + L-glutamate + AMP + diphosphate + 2 H(+). Its pathway is purine metabolism; GMP biosynthesis; GMP from XMP (L-Gln route): step 1/1. Functionally, catalyzes the synthesis of GMP from XMP. In Parasynechococcus marenigrum (strain WH8102), this protein is GMP synthase [glutamine-hydrolyzing].